Consider the following 266-residue polypeptide: Glucosamine-6-phosphate deaminase (266 aa).

The active-site Proton acceptor; for enolization step is Asp72. Asp141 functions as the For ring-opening step in the catalytic mechanism. The Proton acceptor; for ring-opening step role is filled by His143. Catalysis depends on Glu148, which acts as the For ring-opening step.

Belongs to the glucosamine/galactosamine-6-phosphate isomerase family. NagB subfamily. As to quaternary structure, homohexamer; trimer of disulfide-linked dimers.

It carries out the reaction alpha-D-glucosamine 6-phosphate + H2O = beta-D-fructose 6-phosphate + NH4(+). The protein operates within amino-sugar metabolism; N-acetylneuraminate degradation; D-fructose 6-phosphate from N-acetylneuraminate: step 5/5. Its activity is regulated as follows. Allosterically activated by N-acetylglucosamine 6-phosphate (GlcNAc6P). Functionally, catalyzes the reversible isomerization-deamination of glucosamine 6-phosphate (GlcN6P) to form fructose 6-phosphate (Fru6P) and ammonium ion. In Shigella boydii serotype 18 (strain CDC 3083-94 / BS512), this protein is Glucosamine-6-phosphate deaminase.